We begin with the raw amino-acid sequence, 219 residues long: Thiopurine S-methyltransferase (219 aa).

Residues W10, L45, E66, and R123 each coordinate S-adenosyl-L-methionine.

This sequence belongs to the class I-like SAM-binding methyltransferase superfamily. TPMT family.

It is found in the cytoplasm. It catalyses the reaction S-adenosyl-L-methionine + a thiopurine = S-adenosyl-L-homocysteine + a thiopurine S-methylether.. The sequence is that of Thiopurine S-methyltransferase from Bordetella bronchiseptica (strain ATCC BAA-588 / NCTC 13252 / RB50) (Alcaligenes bronchisepticus).